Reading from the N-terminus, the 974-residue chain is Probable proton ATPase 1B (974 aa).

Residues 1-23 show a composition bias toward basic and acidic residues; that stretch reads MSSKKYELDAAAFEDKPESHSDA. The segment at 1–61 is disordered; sequence MSSKKYELDA…ATDLLPPSKG (61 aa). The next 4 helical transmembrane spans lie at 93-112, 118-137, 265-286, and 295-321; these read GLWG…EFAL, GAIL…YETI, VMLA…YLLA, and ALQF…TLAV. Residue Asp-351 is the 4-aspartylphosphate intermediate of the active site. The next 6 membrane-spanning stretches (helical) occupy residues 631–651, 662–684, 698–712, 738–761, 813–840, and 869–887; these read AAAD…AMLV, FLTY…CFSL, FFHL…ITLL, VVFV…LWIG, FFFY…AASF, and VWIY…KVLA. The interval 952–974 is disordered; sequence REDTHVLNESTSPVNAFSPKVKK.

The protein belongs to the cation transport ATPase (P-type) (TC 3.A.3) family. Type IIIA subfamily.

The protein resides in the membrane. The catalysed reaction is ATP + H2O + H(+)(in) = ADP + phosphate + 2 H(+)(out). This is Probable proton ATPase 1B (H1B) from Leishmania donovani.